A 450-amino-acid polypeptide reads, in one-letter code: Phosphoglucosamine mutase (450 aa).

Serine 102 functions as the Phosphoserine intermediate in the catalytic mechanism. Mg(2+) is bound by residues serine 102, aspartate 243, aspartate 245, and aspartate 247. Position 102 is a phosphoserine (serine 102).

Belongs to the phosphohexose mutase family. Mg(2+) serves as cofactor. In terms of processing, activated by phosphorylation.

The enzyme catalyses alpha-D-glucosamine 1-phosphate = D-glucosamine 6-phosphate. Catalyzes the conversion of glucosamine-6-phosphate to glucosamine-1-phosphate. The polypeptide is Phosphoglucosamine mutase (Agrobacterium fabrum (strain C58 / ATCC 33970) (Agrobacterium tumefaciens (strain C58))).